The chain runs to 581 residues: Arginine--tRNA ligase (581 aa).

Positions Ala-131 to His-141 match the 'HIGH' region motif.

It belongs to the class-I aminoacyl-tRNA synthetase family. Monomer.

Its subcellular location is the cytoplasm. It catalyses the reaction tRNA(Arg) + L-arginine + ATP = L-arginyl-tRNA(Arg) + AMP + diphosphate. The sequence is that of Arginine--tRNA ligase from Nitrosospira multiformis (strain ATCC 25196 / NCIMB 11849 / C 71).